The primary structure comprises 159 residues: Large ribosomal subunit protein uL15 (159 aa).

A disordered region spans residues 1 to 46; that stretch reads MKLNELSPSVPKKNRKRIGRGNSSGWGKTAGKGSNGQNSRAGGGVK. A compositionally biased stretch (gly residues) spans 22 to 34; it reads NSSGWGKTAGKGS.

This sequence belongs to the universal ribosomal protein uL15 family. In terms of assembly, part of the 50S ribosomal subunit.

Functionally, binds to the 23S rRNA. The sequence is that of Large ribosomal subunit protein uL15 from Fusobacterium nucleatum subsp. nucleatum (strain ATCC 25586 / DSM 15643 / BCRC 10681 / CIP 101130 / JCM 8532 / KCTC 2640 / LMG 13131 / VPI 4355).